The following is a 313-amino-acid chain: Glucosyl-dolichyl phosphate glucuronosyltransferase (313 aa).

A helical transmembrane segment spans residues 284–304 (LIAIFVFTAAVGFGYVYGLLT).

Belongs to the glycosyltransferase 2 family.

It is found in the cell membrane. The catalysed reaction is an archaeal dolichyl alpha-D-glucosyl phosphate + UDP-alpha-D-glucuronate = an archaeal dolichyl beta-D-glucuronosyl-(1-&gt;4)-alpha-D-glucosyl phosphate + UDP + H(+). The protein operates within cell surface structure biogenesis; S-layer biogenesis. Involved in the protein N-glycosylation pathway responsible for the assembly and attachment of an N-linked pentasaccharide that decorates the S-layer glycoprotein and flagellins. Catalyzes the transfer of a glucuronate residue (GlcA) to a glucose residue already bound to a dolichol phosphate (DolP), a compound that serves as a glycan lipid carrier in Archaea. In vitro, is able to add GlcA to DolP-Glc in which the omega-position isoprene is not saturated. However, the likely physiological lipid substrate is alpha,omega-saturated. The sequence is that of Glucosyl-dolichyl phosphate glucuronosyltransferase from Haloferax volcanii (strain ATCC 29605 / DSM 3757 / JCM 8879 / NBRC 14742 / NCIMB 2012 / VKM B-1768 / DS2) (Halobacterium volcanii).